A 287-amino-acid chain; its full sequence is Homoserine kinase (287 aa).

79–89 is an ATP binding site; that stretch reads PLARGLGSSSS.

The protein belongs to the GHMP kinase family. Homoserine kinase subfamily.

The protein localises to the cytoplasm. It carries out the reaction L-homoserine + ATP = O-phospho-L-homoserine + ADP + H(+). Its pathway is amino-acid biosynthesis; L-threonine biosynthesis; L-threonine from L-aspartate: step 4/5. Its function is as follows. Catalyzes the ATP-dependent phosphorylation of L-homoserine to L-homoserine phosphate. This is Homoserine kinase from Enterococcus faecalis (strain ATCC 700802 / V583).